The chain runs to 531 residues: RCC1 and BTB domain-containing protein 1 (531 aa).

RCC1 repeat units lie at residues 40-91, 93-145, 147-198, 199-250, 252-302, and 304-356; these read NDEV…LLTT, DGVV…ALAA, GELF…AVLD, SGEV…ALTD, GLLY…AAKT, and GGHV…FLTV. 2 BTB domains span residues 370-437 and 470-499; these read ADLK…DLPP and ENAF…INHL.

In the retina, mainly expressed in the inner retina with strong signals reaching up to the outer plexiform layer (at protein level).

The protein resides in the nucleus. In terms of biological role, may be involved in cell cycle regulation by chromatin remodeling. The protein is RCC1 and BTB domain-containing protein 1 (Rcbtb1) of Mus musculus (Mouse).